Here is an 82-residue protein sequence, read N- to C-terminus: Putative membrane protein insertion efficiency factor (82 aa).

The protein belongs to the UPF0161 family.

The protein resides in the cell inner membrane. Functionally, could be involved in insertion of integral membrane proteins into the membrane. The polypeptide is Putative membrane protein insertion efficiency factor (Francisella tularensis subsp. novicida (strain U112)).